The primary structure comprises 254 residues: Alcohol dehydrogenase (254 aa).

An NAD(+)-binding site is contributed by 10 to 33 (FVAGLGGIGLDTSREIVKSGPKNL). Residue S138 participates in substrate binding. The active-site Proton acceptor is the Y151.

Belongs to the short-chain dehydrogenases/reductases (SDR) family. In terms of assembly, homodimer.

The catalysed reaction is a primary alcohol + NAD(+) = an aldehyde + NADH + H(+). It carries out the reaction a secondary alcohol + NAD(+) = a ketone + NADH + H(+). This Drosophila heteroneura (Fruit fly) protein is Alcohol dehydrogenase (Adh).